The following is a 418-amino-acid chain: Beta-arrestin-1 (418 aa).

Residues 1-163 (MGDKGTRVFK…LEEKIHKRNS (163 aa)) form an interaction with SRC region. Positions 45–86 (PEYLKERRVYVTLTCAFRYGREDLDVLGLTFRKDLFVANVQS) are interaction with CHRM2. Tyr47 is modified (phosphotyrosine). Positions 250, 255, 324, and 326 each coordinate 1D-myo-inositol hexakisphosphate. The segment at 318-418 (IVSYKVKVKL…GTGSPHLNNR (101 aa)) is interaction with TRAF6. Disordered stretches follow at residues 353 to 374 (HPKPKEEPPHREVPESETPVDT) and 397 to 418 (KGMKDDKDEEDDGTGSPHLNNR). Residues 355 to 366 (KPKEEPPHREVP) show a composition bias toward basic and acidic residues. Ser412 carries the phosphoserine modification. At Ser412 the chain carries Phosphoserine; by GRK5.

This sequence belongs to the arrestin family. As to quaternary structure, monomer. Homodimer. Homooligomer; the self-association is mediated by InsP6-binding. Heterooligomer with ARRB2; the association is mediated by InsP6-binding. Interacts with ADRB2 (phosphorylated). Interacts with CHRM2 (phosphorylated). Interacts with LHCGR. Interacts with CYTH2 and CASR. Interacts with AP2B1 (dephosphorylated at 'Tyr-737'); phosphorylation of AP2B1 at 'Tyr-737' disrupts the interaction. Interacts (dephosphorylated at Ser-412) with CLTC. Interacts with CCR2 and GRK2. Interacts with CRR5. Interacts with PTAFR (phosphorylated on serine residues). Interacts with CLTC and MAP2K3. Interacts with CREB1. Interacts with TRAF6. Interacts with IGF1R and MDM2. Interacts with C5AR1. Interacts with PDE4D. Interacts with SRC (via the SH3 domain and the protein kinase domain); the interaction is independent of the phosphorylation state of SRC C-terminus. Interacts with TACR1. Interacts with RAF1. Interacts with CHUK, IKBKB and MAP3K14. Interacts with DVL1; the interaction is enhanced by phosphorylation of DVL1. Interacts with DVL2; the interaction is enhanced by phosphorylation of DVL2. Interacts with IGF1R. Associates with MAP kinase p38. Part of a MAPK signaling complex consisting of TACR1, ARRB1, SRC, MAPK1 (activated) and MAPK3 (activated). Part of a MAPK signaling complex consisting of F2RL1, ARRB1, RAF1, MAPK1 (activated) and MAPK3 (activated). Interacts with GPR143. Interacts with MAP2K4/MKK4. Interacts with HCK and CXCR1 (phosphorylated). Interacts with ACKR3 and ACKR4. Interacts with ARRDC1; the interaction is direct. Interacts with GPR61, GPR62 and GPR135. Post-translationally, constitutively phosphorylated at Ser-412 in the cytoplasm. At the plasma membrane, is rapidly dephosphorylated, a process that is required for clathrin binding and beta-2 adrenergic receptor/ADRB2 endocytosis but not for ADRB2 binding and desensitization. Once internalized, is rephosphorylated. In terms of processing, the ubiquitination status appears to regulate the formation and trafficking of beta-arrestin-GPCR complexes and signaling. Ubiquitination appears to occur GPCR-specific. Ubiquitinated by MDM2; the ubiquitination is required for rapid internalization of ADRB2. Deubiquitinated by USP33; the deubiquitination leads to a dissociation of the beta-arrestin-GPCR complex. Stimulation of a class A GPCR, such as ADRB2, induces transient ubiquitination and subsequently promotes association with USP33. As to expression, predominantly localized in neuronal tissues and in the spleen.

It localises to the cytoplasm. The protein resides in the nucleus. It is found in the cell membrane. The protein localises to the membrane. Its subcellular location is the clathrin-coated pit. It localises to the cell projection. The protein resides in the pseudopodium. It is found in the cytoplasmic vesicle. Its function is as follows. Functions in regulating agonist-mediated G-protein coupled receptor (GPCR) signaling by mediating both receptor desensitization and resensitization processes. During homologous desensitization, beta-arrestins bind to the GPRK-phosphorylated receptor and sterically preclude its coupling to the cognate G-protein; the binding appears to require additional receptor determinants exposed only in the active receptor conformation. The beta-arrestins target many receptors for internalization by acting as endocytic adapters (CLASPs, clathrin-associated sorting proteins) and recruiting the GPRCs to the adapter protein 2 complex 2 (AP-2) in clathrin-coated pits (CCPs). However, the extent of beta-arrestin involvement appears to vary significantly depending on the receptor, agonist and cell type. Internalized arrestin-receptor complexes traffic to intracellular endosomes, where they remain uncoupled from G-proteins. Two different modes of arrestin-mediated internalization occur. Class A receptors, like ADRB2, OPRM1, ENDRA, D1AR and ADRA1B dissociate from beta-arrestin at or near the plasma membrane and undergo rapid recycling. Class B receptors, like AVPR2, AGTR1, NTSR1, TRHR and TACR1 internalize as a complex with arrestin and traffic with it to endosomal vesicles, presumably as desensitized receptors, for extended periods of time. Receptor resensitization then requires that receptor-bound arrestin is removed so that the receptor can be dephosphorylated and returned to the plasma membrane. Involved in internalization of P2RY4 and UTP-stimulated internalization of P2RY2. Involved in phosphorylation-dependent internalization of OPRD1 ands subsequent recycling. Involved in the degradation of cAMP by recruiting cAMP phosphodiesterases to ligand-activated receptors. Beta-arrestins function as multivalent adapter proteins that can switch the GPCR from a G-protein signaling mode that transmits short-lived signals from the plasma membrane via small molecule second messengers and ion channels to a beta-arrestin signaling mode that transmits a distinct set of signals that are initiated as the receptor internalizes and transits the intracellular compartment. Acts as a signaling scaffold for MAPK pathways such as MAPK1/3 (ERK1/2). ERK1/2 activated by the beta-arrestin scaffold is largely excluded from the nucleus and confined to cytoplasmic locations such as endocytic vesicles, also called beta-arrestin signalosomes. Recruits c-Src/SRC to ADRB2 resulting in ERK activation. GPCRs for which the beta-arrestin-mediated signaling relies on both ARRB1 and ARRB2 (codependent regulation) include ADRB2, F2RL1 and PTH1R. For some GPCRs the beta-arrestin-mediated signaling relies on either ARRB1 or ARRB2 and is inhibited by the other respective beta-arrestin form (reciprocal regulation). Inhibits ERK1/2 signaling in AGTR1- and AVPR2-mediated activation (reciprocal regulation). Is required for SP-stimulated endocytosis of NK1R and recruits c-Src/SRC to internalized NK1R resulting in ERK1/2 activation, which is required for the antiapoptotic effects of SP. Is involved in proteinase-activated F2RL1-mediated ERK activity. Acts as a signaling scaffold for the AKT1 pathway. Is involved in alpha-thrombin-stimulated AKT1 signaling. Is involved in IGF1-stimulated AKT1 signaling leading to increased protection from apoptosis. Involved in activation of the p38 MAPK signaling pathway and in actin bundle formation. Involved in F2RL1-mediated cytoskeletal rearrangement and chemotaxis. Involved in AGTR1-mediated stress fiber formation by acting together with GNAQ to activate RHOA. Appears to function as signaling scaffold involved in regulation of MIP-1-beta-stimulated CCR5-dependent chemotaxis. Involved in attenuation of NF-kappa-B-dependent transcription in response to GPCR or cytokine stimulation by interacting with and stabilizing CHUK. May serve as nuclear messenger for GPCRs. Involved in OPRD1-stimulated transcriptional regulation by translocating to CDKN1B and FOS promoter regions and recruiting EP300 resulting in acetylation of histone H4. Involved in regulation of LEF1 transcriptional activity via interaction with DVL1 and/or DVL2 Also involved in regulation of receptors other than GPCRs. Involved in Toll-like receptor and IL-1 receptor signaling through the interaction with TRAF6 which prevents TRAF6 autoubiquitination and oligomerization required for activation of NF-kappa-B and JUN. Binds phosphoinositides. Binds inositolhexakisphosphate (InsP6). Involved in IL8-mediated granule release in neutrophils. Required for atypical chemokine receptor ACKR2-induced RAC1-LIMK1-PAK1-dependent phosphorylation of cofilin (CFL1) and for the up-regulation of ACKR2 from endosomal compartment to cell membrane, increasing its efficiency in chemokine uptake and degradation. Involved in the internalization of the atypical chemokine receptor ACKR3. Negatively regulates the NOTCH signaling pathway by mediating the ubiquitination and degradation of NOTCH1 by ITCH. Participates in the recruitment of the ubiquitin-protein ligase to the receptor. This is Beta-arrestin-1 from Rattus norvegicus (Rat).